Consider the following 459-residue polypeptide: Phosphomethylpyrimidine synthase (459 aa).

Substrate is bound by residues Asn-80, Met-109, Tyr-139, His-175, 195–197, 236–239, and Glu-275; these read SRG and DSLR. Residue His-279 coordinates Zn(2+). Tyr-302 is a substrate binding site. His-343 provides a ligand contact to Zn(2+). [4Fe-4S] cluster-binding residues include Cys-423, Cys-426, and Cys-431.

The protein belongs to the ThiC family. The cofactor is [4Fe-4S] cluster.

It catalyses the reaction 5-amino-1-(5-phospho-beta-D-ribosyl)imidazole + S-adenosyl-L-methionine = 4-amino-2-methyl-5-(phosphooxymethyl)pyrimidine + CO + 5'-deoxyadenosine + formate + L-methionine + 3 H(+). It functions in the pathway cofactor biosynthesis; thiamine diphosphate biosynthesis. Its function is as follows. Catalyzes the synthesis of the hydroxymethylpyrimidine phosphate (HMP-P) moiety of thiamine from aminoimidazole ribotide (AIR) in a radical S-adenosyl-L-methionine (SAM)-dependent reaction. In Synechocystis sp. (strain ATCC 27184 / PCC 6803 / Kazusa), this protein is Phosphomethylpyrimidine synthase.